Here is a 227-residue protein sequence, read N- to C-terminus: MEALKKLAGVTAAQYVTDGMTIGLGTGSTAYYFVEEIGRRIKEEGLQVVGVTTSSVTTKQAEGLGIPLTSIDDIDCIDLTVDGADEVDKAFNGIKGGGAALLMEKIVATPTKEYIWVVDESKLVDHLGAFKLPVEVVQYGADRLFRVFERAGYKPSFRMKGDKRLITDMQNFIIDLDLGCIENPCEFGRLLDQTVGVVEHGLFNGMVDKVIVAGQAGVTVLEANQST.

Residues Thr26–Thr29, Asp82–Asp85, and Lys95–Gly98 contribute to the substrate site. The active-site Proton acceptor is Glu104. Substrate is bound at residue Lys122.

It belongs to the ribose 5-phosphate isomerase family. As to quaternary structure, homodimer.

It catalyses the reaction aldehydo-D-ribose 5-phosphate = D-ribulose 5-phosphate. The protein operates within carbohydrate degradation; pentose phosphate pathway; D-ribose 5-phosphate from D-ribulose 5-phosphate (non-oxidative stage): step 1/1. Catalyzes the reversible conversion of ribose-5-phosphate to ribulose 5-phosphate. This Streptococcus equi subsp. zooepidemicus (strain MGCS10565) protein is Ribose-5-phosphate isomerase A.